Consider the following 122-residue polypeptide: MALNIENIIAEIKEASILELNDLVKAIEEEFGVTAAAPVAAAADGAADAGAAKDSFDVELTSAGDKKVGVIKVVREITGEGLKEAKAIVDGAPSVIKEGVSAAEAEEIKAKLEEAGASVTLK.

The protein belongs to the bacterial ribosomal protein bL12 family. In terms of assembly, homodimer. Part of the ribosomal stalk of the 50S ribosomal subunit. Forms a multimeric L10(L12)X complex, where L10 forms an elongated spine to which 2 to 4 L12 dimers bind in a sequential fashion. Binds GTP-bound translation factors.

In terms of biological role, forms part of the ribosomal stalk which helps the ribosome interact with GTP-bound translation factors. Is thus essential for accurate translation. The polypeptide is Large ribosomal subunit protein bL12 (Streptococcus thermophilus (strain ATCC BAA-491 / LMD-9)).